Here is a 454-residue protein sequence, read N- to C-terminus: Aspartokinase 3 (454 aa).

2 ACT domains span residues 312-388 (ISKY…ALIM) and 389-454 (VVGE…VLIS).

Belongs to the aspartokinase family. As to quaternary structure, monomer.

The catalysed reaction is L-aspartate + ATP = 4-phospho-L-aspartate + ADP. It participates in amino-acid biosynthesis; L-lysine biosynthesis via DAP pathway; (S)-tetrahydrodipicolinate from L-aspartate: step 1/4. It functions in the pathway amino-acid biosynthesis; L-methionine biosynthesis via de novo pathway; L-homoserine from L-aspartate: step 1/3. The protein operates within amino-acid biosynthesis; L-threonine biosynthesis; L-threonine from L-aspartate: step 1/5. In terms of biological role, catalyzes the phosphorylation of the beta-carboxyl group of aspartic acid with ATP to yield 4-phospho-L-aspartate, which is involved in the branched biosynthetic pathway leading to the biosynthesis of amino acids threonine, isoleucine and methionine. This chain is Aspartokinase 3 (yclM), found in Bacillus subtilis (strain 168).